The chain runs to 460 residues: Flavonol 3-O-glucosyltransferase (460 aa).

H23 serves as the catalytic Proton acceptor. Residues H23 and Q88 each contribute to the an anthocyanidin site. D123 functions as the Charge relay in the catalytic mechanism. T145 serves as a coordination point for UDP-alpha-D-glucose. H154 provides a ligand contact to an anthocyanidin. Residues A339, Q341, H356, W359, N360, S361, and E364 each coordinate UDP-alpha-D-glucose. G379 contacts an anthocyanidin. D380 and Q381 together coordinate UDP-alpha-D-glucose.

The protein belongs to the UDP-glycosyltransferase family.

It carries out the reaction a flavonol + UDP-alpha-D-glucose = a flavonol 3-O-beta-D-glucoside + UDP + H(+). The enzyme catalyses quercetin + UDP-alpha-D-glucose = quercetin 3-O-beta-D-glucoside + UDP + H(+). The protein operates within flavonoid metabolism. Flavonol 3-O-glucosyltransferase that catalyzes the transfer of glucose from UDP-glucose to the 3-OH position of quercetin and kaempferol. Possesses high quercetin 3-O-glucosyltransferase activity in vitro. Catalyzes the glycosylation of anthocyanins from UDP-glucose. Also active in vitro on benzoates and benzoate derivatives. This chain is Flavonol 3-O-glucosyltransferase, found in Arabidopsis thaliana (Mouse-ear cress).